Here is a 193-residue protein sequence, read N- to C-terminus: NAD(P)H-quinone oxidoreductase subunit I (193 aa).

2 consecutive 4Fe-4S ferredoxin-type domains span residues 55–84 (GRIH…VDWE) and 95–124 (KHYS…VTEE). The [4Fe-4S] cluster site is built by C64, C67, C70, C74, C104, C107, C110, and C114.

The protein belongs to the complex I 23 kDa subunit family. In terms of assembly, NDH-1 is composed of at least 11 different subunits. [4Fe-4S] cluster is required as a cofactor.

It localises to the cellular thylakoid membrane. It catalyses the reaction a plastoquinone + NADH + (n+1) H(+)(in) = a plastoquinol + NAD(+) + n H(+)(out). The enzyme catalyses a plastoquinone + NADPH + (n+1) H(+)(in) = a plastoquinol + NADP(+) + n H(+)(out). Functionally, NDH-1 shuttles electrons from an unknown electron donor, via FMN and iron-sulfur (Fe-S) centers, to quinones in the respiratory and/or the photosynthetic chain. The immediate electron acceptor for the enzyme in this species is believed to be plastoquinone. Couples the redox reaction to proton translocation, and thus conserves the redox energy in a proton gradient. This is NAD(P)H-quinone oxidoreductase subunit I from Cyanothece sp. (strain PCC 7425 / ATCC 29141).